A 366-amino-acid polypeptide reads, in one-letter code: RISC-loading complex subunit TARBP2 (366 aa).

Sufficient for interaction with PRKRA regions lie at residues 22–105 (MLAA…EPAL), 152–234 (SPQQ…DARD), and 287–366 (LGAL…AGSK). Positions 30–97 (TPISLLQEYG…AEVALKHLKG (68 aa)) constitute a DRBM 1 domain. The disordered stretch occupies residues 135-158 (PSAVPTRSSPMEVQPPVSPQQSEC). S152 carries the phosphoserine modification. DRBM domains follow at residues 159–227 (NPVG…RVHT) and 293–361 (ACCS…YLKI). The tract at residues 228–366 (VPLDARDGNE…QYLKIMAGSK (139 aa)) is sufficient for interaction with DICER1.

The protein belongs to the TARBP2 family. As to quaternary structure, self-associates. Component of the RISC loading complex (RLC), or micro-RNA (miRNA) loading complex (miRLC), which is composed of DICER1, AGO2 and TARBP2. Note that the trimeric RLC/miRLC is also referred to as RISC. Interacts with EIF2AK2/PKR and inhibits its protein kinase activity. Interacts with DHX9 and PRKRA. Interacts with DICER1, AGO2, MOV10, EIF6 and RPL7A (60S ribosome subunit); they form a large RNA-induced silencing complex (RISC). Interacts with IRF7; this interaction prevents IRF7 phosphorylation and activation.

The protein resides in the cytoplasm. It is found in the perinuclear region. The protein localises to the nucleus. Required for formation of the RNA induced silencing complex (RISC). Component of the RISC loading complex (RLC), also known as the micro-RNA (miRNA) loading complex (miRLC), which is composed of DICER1, AGO2 and TARBP2. Within the RLC/miRLC, DICER1 and TARBP2 are required to process precursor miRNAs (pre-miRNAs) to mature miRNAs and then load them onto AGO2. AGO2 bound to the mature miRNA constitutes the minimal RISC and may subsequently dissociate from DICER1 and TARBP2. May also play a role in the production of short interfering RNAs (siRNAs) from double-stranded RNA (dsRNA) by DICER1. Binds in vitro to the PRM1 3'-UTR. Seems to act as a repressor of translation. For some pre-miRNA substrates, may also alter the choice of cleavage site by DICER1. Negatively regulates IRF7-mediated IFN-beta signaling triggered by viral infection by inhibiting the phosphorylation of IRF7 and promoting its 'Lys'-48-linked ubiquitination and degradation. In Bos taurus (Bovine), this protein is RISC-loading complex subunit TARBP2.